The primary structure comprises 308 residues: Ribosomal protein L11 methyltransferase (308 aa).

The S-adenosyl-L-methionine site is built by threonine 157, glycine 178, aspartate 200, and asparagine 243.

The protein belongs to the methyltransferase superfamily. PrmA family.

It is found in the cytoplasm. It carries out the reaction L-lysyl-[protein] + 3 S-adenosyl-L-methionine = N(6),N(6),N(6)-trimethyl-L-lysyl-[protein] + 3 S-adenosyl-L-homocysteine + 3 H(+). Its function is as follows. Methylates ribosomal protein L11. The protein is Ribosomal protein L11 methyltransferase of Pelotomaculum thermopropionicum (strain DSM 13744 / JCM 10971 / SI).